The sequence spans 330 residues: D-alanine--D-alanine ligase (330 aa).

In terms of domain architecture, ATP-grasp spans 120 to 326 (KLWYDALGIP…FKTFLQKAVL (207 aa)). 150 to 205 (AFKQWGGLFVKAACQGSSVGCYKVTSEEELAQAINGAFGYSQQVLVEKAVKPRELE) serves as a coordination point for ATP. Residues D280, E293, and N295 each coordinate Mg(2+).

The protein belongs to the D-alanine--D-alanine ligase family. It depends on Mg(2+) as a cofactor. The cofactor is Mn(2+).

It is found in the cytoplasm. The catalysed reaction is 2 D-alanine + ATP = D-alanyl-D-alanine + ADP + phosphate + H(+). Its pathway is cell wall biogenesis; peptidoglycan biosynthesis. Functionally, cell wall formation. This Aliivibrio fischeri (strain MJ11) (Vibrio fischeri) protein is D-alanine--D-alanine ligase.